The following is a 263-amino-acid chain: Glutamate racemase (263 aa).

Substrate contacts are provided by residues 13–14 (DS) and 45–46 (YG). Cys-77 serves as the catalytic Proton donor/acceptor. 78 to 79 (NT) serves as a coordination point for substrate. The active-site Proton donor/acceptor is the Cys-185. Residue 186-187 (TH) coordinates substrate.

The protein belongs to the aspartate/glutamate racemases family.

It carries out the reaction L-glutamate = D-glutamate. The protein operates within cell wall biogenesis; peptidoglycan biosynthesis. Functionally, provides the (R)-glutamate required for cell wall biosynthesis. In Vibrio vulnificus (strain YJ016), this protein is Glutamate racemase.